The chain runs to 225 residues: ATP phosphoribosyltransferase (225 aa).

It belongs to the ATP phosphoribosyltransferase family. Short subfamily. As to quaternary structure, heteromultimer composed of HisG and HisZ subunits.

It is found in the cytoplasm. The enzyme catalyses 1-(5-phospho-beta-D-ribosyl)-ATP + diphosphate = 5-phospho-alpha-D-ribose 1-diphosphate + ATP. Its pathway is amino-acid biosynthesis; L-histidine biosynthesis; L-histidine from 5-phospho-alpha-D-ribose 1-diphosphate: step 1/9. Its function is as follows. Catalyzes the condensation of ATP and 5-phosphoribose 1-diphosphate to form N'-(5'-phosphoribosyl)-ATP (PR-ATP). Has a crucial role in the pathway because the rate of histidine biosynthesis seems to be controlled primarily by regulation of HisG enzymatic activity. This chain is ATP phosphoribosyltransferase, found in Herminiimonas arsenicoxydans.